The sequence spans 105 residues: Small ribosomal subunit protein bS18 (105 aa).

The segment covering 1–10 (MAEETNQQAP) has biased composition (polar residues). Residues 1–34 (MAEETNQQAPESGASSSQPTSRPSGPRGGSGGRK) form a disordered region. Over residues 12 to 25 (SGASSSQPTSRPSG) the composition is skewed to low complexity.

This sequence belongs to the bacterial ribosomal protein bS18 family. In terms of assembly, part of the 30S ribosomal subunit. Forms a tight heterodimer with protein bS6.

In terms of biological role, binds as a heterodimer with protein bS6 to the central domain of the 16S rRNA, where it helps stabilize the platform of the 30S subunit. The protein is Small ribosomal subunit protein bS18 of Acidobacterium capsulatum (strain ATCC 51196 / DSM 11244 / BCRC 80197 / JCM 7670 / NBRC 15755 / NCIMB 13165 / 161).